The sequence spans 188 residues: Elongation factor P (188 aa).

Belongs to the elongation factor P family.

It localises to the cytoplasm. It participates in protein biosynthesis; polypeptide chain elongation. In terms of biological role, involved in peptide bond synthesis. Stimulates efficient translation and peptide-bond synthesis on native or reconstituted 70S ribosomes in vitro. Probably functions indirectly by altering the affinity of the ribosome for aminoacyl-tRNA, thus increasing their reactivity as acceptors for peptidyl transferase. This is Elongation factor P from Phocaeicola vulgatus (strain ATCC 8482 / DSM 1447 / JCM 5826 / CCUG 4940 / NBRC 14291 / NCTC 11154) (Bacteroides vulgatus).